We begin with the raw amino-acid sequence, 476 residues long: Inner membrane transporter YcaM (476 aa).

Residues 1–9 (MAGNVQEKQ) lie on the Cytoplasmic side of the membrane. A helical transmembrane segment spans residues 10–30 (LRWYNIALMSFITVWGFGNVV). The Periplasmic portion of the chain corresponds to 31–38 (NNYANQGL). Residues 39-59 (VVVFSWVFIFALYFTPYALIV) form a helical membrane-spanning segment. Over 60-80 (GQLGSTFKDGKGGVSTWIKHT) the chain is Cytoplasmic. A helical transmembrane segment spans residues 81 to 101 (MGPGLAYLAAWTYWVVHIPYL). The Periplasmic segment spans residues 102-125 (AQKPQAILIALGWAMKGDGSLIKE). The helical transmembrane segment at 126–146 (YSVVALQGLTLVLFIFFMWVA) threads the bilayer. Over 147-154 (SRGMKSLK) the chain is Cytoplasmic. A helical transmembrane segment spans residues 155–175 (IVGSVAGIAMFVMSLLYVAMA). The Periplasmic portion of the chain corresponds to 176–195 (VTAPAITEVHIATTNITWET). A helical membrane pass occupies residues 196-216 (FIPHIDFTYITTISMLVFAVG). Over 217 to 240 (GAEKISPYVNQTRNPGKEFPKGML) the chain is Cytoplasmic. A helical transmembrane segment spans residues 241–261 (CLAVMVAVCAILGSLAMGMMF). Residues 262 to 291 (DSRNIPDDLMTNGQYYAFQKLGEYYNMGNT) are Periplasmic-facing. A helical transmembrane segment spans residues 292 to 312 (LMVIYAIANTLGQVAALVFSI). Residues 313–343 (DAPLKVLLGDADSKYIPASLCRTNASGTPVN) lie on the Cytoplasmic side of the membrane. Residues 344–364 (GYFLTLVLVAILIMLPTLGIG) traverse the membrane as a helical segment. Over 365 to 375 (DMNNLYKWLLN) the chain is Periplasmic. A helical membrane pass occupies residues 376–396 (LNSVVMPLRYLWVFVAFIAVV). Residues 397 to 414 (RLAQKYKPEYVFIRNKPL) are Cytoplasmic-facing. The helical transmembrane segment at 415 to 435 (AMTVGIWCFAFTAFACLTGIF) threads the bilayer. Residues 436–448 (PKMEAFTAEWTFQ) lie on the Periplasmic side of the membrane. A helical transmembrane segment spans residues 449-469 (LALNVATPFVLVGLGLIFPLL). The Cytoplasmic portion of the chain corresponds to 470 to 476 (ARKANSK).

Belongs to the amino acid-polyamine-organocation (APC) superfamily.

It is found in the cell inner membrane. This chain is Inner membrane transporter YcaM (ycaM), found in Escherichia coli (strain K12).